The following is a 581-amino-acid chain: Probable CDP-diacylglycerol--glycerol-3-phosphate 3-phosphatidyltransferase (581 aa).

Positions 27 to 65 (RSATTTTTTTTKACGNGSSQSPPSTPLLSSKSSTITSNK) are disordered. Residues 44–65 (SSQSPPSTPLLSSKSSTITSNK) are compositionally biased toward low complexity. 160 to 167 (ASLYLGTS) serves as a coordination point for ATP. PLD phosphodiesterase domains are found at residues 248 to 274 (TIGV…SKDY) and 487 to 520 (DKWT…GSRS). Residues His253, Lys255, and Asp260 contribute to the active site.

Belongs to the CDP-alcohol phosphatidyltransferase class-II family.

It catalyses the reaction a CDP-1,2-diacyl-sn-glycerol + sn-glycerol 3-phosphate = a 1,2-diacyl-sn-glycero-3-phospho-(1'-sn-glycero-3'-phosphate) + CMP + H(+). It functions in the pathway phospholipid metabolism; phosphatidylglycerol biosynthesis; phosphatidylglycerol from CDP-diacylglycerol: step 1/2. Functionally, functions in the biosynthesis of the anionic phospholipids phosphatidylglycerol and cardiolipin. The protein is Probable CDP-diacylglycerol--glycerol-3-phosphate 3-phosphatidyltransferase (pgs1) of Dictyostelium discoideum (Social amoeba).